A 211-amino-acid chain; its full sequence is MISYYFQGFALGAAMILPLGPQNAFVMNQGIRRQYHLMIALLCALSDLVLISAGIFGGSALLMQSPWLLALVTWGGVAFLLWYGLGALKTAMSSNLELASAEVMKQGRWKIIATMLAVTWLNPHVYLDTFVVLGSLGGQLAMEPKRWFALGTISASFLWFFGLALLAAWLAPRLRTAKAQRIINILVGVVMWLIAFQLAREGVAHMHALFN.

A run of 6 helical transmembrane segments spans residues 1–21 (MISY…PLGP), 37–57 (LMIA…GIFG), 68–88 (LLAL…LGAL), 111–131 (IIAT…DTFV), 147–167 (WFAL…ALLA), and 179–199 (AQRI…FQLA).

Belongs to the LysE/ArgO transporter (TC 2.A.75) family.

The protein localises to the cell inner membrane. It carries out the reaction L-arginine(in) = L-arginine(out). Its function is as follows. Involved in the export of arginine. Important to control the intracellular level of arginine and the correct balance between arginine and lysine. The polypeptide is Arginine exporter protein ArgO (Salmonella enteritidis PT4 (strain P125109)).